Reading from the N-terminus, the 149-residue chain is Ribonuclease H (149 aa).

An RNase H type-1 domain is found at Met1–Glu143. 4 residues coordinate Mg(2+): Asp9, Glu47, Asp69, and Asp135.

The protein belongs to the RNase H family. Monomer. Mg(2+) serves as cofactor.

It is found in the cytoplasm. It carries out the reaction Endonucleolytic cleavage to 5'-phosphomonoester.. Endonuclease that specifically degrades the RNA of RNA-DNA hybrids. This is Ribonuclease H from Albidiferax ferrireducens (strain ATCC BAA-621 / DSM 15236 / T118) (Rhodoferax ferrireducens).